The chain runs to 166 residues: NADH-ubiquinone oxidoreductase chain 6 (166 aa).

6 helical membrane passes run 4-24 (FFSL…VVSA), 27-47 (QGVV…VFLG), 50-70 (FAAL…FGYC), 82-102 (VGGT…LLCL), 109-129 (LLVY…VGVF), and 135-155 (WGLI…LVIL).

It belongs to the complex I subunit 6 family.

It localises to the mitochondrion membrane. The catalysed reaction is a ubiquinone + NADH + 5 H(+)(in) = a ubiquinol + NAD(+) + 4 H(+)(out). Its function is as follows. Core subunit of the mitochondrial membrane respiratory chain NADH dehydrogenase (Complex I) that is believed to belong to the minimal assembly required for catalysis. Complex I functions in the transfer of electrons from NADH to the respiratory chain. The immediate electron acceptor for the enzyme is believed to be ubiquinone. The polypeptide is NADH-ubiquinone oxidoreductase chain 6 (MT-ND6) (Lycodon semicarinatus (Ryukyu odd-tooth snake)).